A 302-amino-acid polypeptide reads, in one-letter code: MTKTKAIDIIGAPSTFGQRKLGVDLGPTAIRYAGLISRLKQLDLDVYDKGDIKVPVVNIEKFHSEQKGLRNYDEIIDVNQKLNKEVSASIENNRFPLVLGGDHSIAVGSVSAISKHYNNLGVIWYDAHGDLNIPEESPSGNIHGMPLRILTGEGPKELLELNSNVIKPENIVLIGMRDLDKGERQFIKDHNIKTFTMSDIDKLGIKEVIENTIEYLKSRNVDGVHLSLDVDALDPLETPGTGTRVLGGLSYRESHFALELLHQSHLISSMDLVEVNPLIDSNNHTAEQAVSLVGTFFGETLL.

4 residues coordinate Mn(2+): histidine 103, aspartate 126, histidine 128, and aspartate 130. Substrate contacts are provided by residues 128–132 (HGDLN), 139–141 (SGN), and aspartate 180. Mn(2+)-binding residues include aspartate 229 and aspartate 231. Substrate is bound by residues threonine 243 and glutamate 274.

Belongs to the arginase family. Mn(2+) is required as a cofactor.

It carries out the reaction L-arginine + H2O = urea + L-ornithine. It functions in the pathway nitrogen metabolism; urea cycle; L-ornithine and urea from L-arginine: step 1/1. The chain is Arginase (arg) from Staphylococcus aureus (strain MSSA476).